The chain runs to 166 residues: Thiol peroxidase (166 aa).

The region spanning 18 to 166 (LKVGDKAPDV…NYEALLKVLK (149 aa)) is the Thioredoxin domain. The active-site Cysteine sulfenic acid (-SOH) intermediate is C60. A disulfide bond links C60 and C94.

Belongs to the peroxiredoxin family. Tpx subfamily. Homodimer.

The enzyme catalyses a hydroperoxide + [thioredoxin]-dithiol = an alcohol + [thioredoxin]-disulfide + H2O. Functionally, thiol-specific peroxidase that catalyzes the reduction of hydrogen peroxide and organic hydroperoxides to water and alcohols, respectively. Plays a role in cell protection against oxidative stress by detoxifying peroxides. This chain is Thiol peroxidase, found in Helicobacter pylori (strain J99 / ATCC 700824) (Campylobacter pylori J99).